The primary structure comprises 211 residues: Ribosomal RNA small subunit methyltransferase G (211 aa).

Residues Gly76, Leu81, 127–128 (VE), and Arg142 each bind S-adenosyl-L-methionine.

This sequence belongs to the methyltransferase superfamily. RNA methyltransferase RsmG family.

The protein resides in the cytoplasm. The catalysed reaction is guanosine(527) in 16S rRNA + S-adenosyl-L-methionine = N(7)-methylguanosine(527) in 16S rRNA + S-adenosyl-L-homocysteine. Its function is as follows. Specifically methylates the N7 position of guanine in position 527 of 16S rRNA. In Vibrio campbellii (strain ATCC BAA-1116), this protein is Ribosomal RNA small subunit methyltransferase G.